An 824-amino-acid chain; its full sequence is Translation initiation factor IF-2 (824 aa).

Positions 1 to 234 (MSDQDGKKPL…RQKAMGGSVD (234 aa)) are disordered. Composition is skewed to basic and acidic residues over residues 59-75 (GGKR…DRRL) and 82-144 (KARE…RRNA). Residues 145-159 (PPEAAAPAVDPAAAA) are compositionally biased toward low complexity. A compositionally biased stretch (basic and acidic residues) spans 170–186 (ARREPERDNKRENRSRG). The tr-type G domain occupies 321–491 (PRPPVITIMG…ALQAELLELK (171 aa)). A G1 region spans residues 330–337 (GHVDHGKT). Residue 330–337 (GHVDHGKT) participates in GTP binding. The G2 stretch occupies residues 355–359 (GITQH). Residues 377–380 (DTPG) are G3. Residues 377 to 381 (DTPGH) and 431 to 434 (NKID) each bind GTP. The tract at residues 431-434 (NKID) is G4. Residues 467–469 (SAM) form a G5 region.

It belongs to the TRAFAC class translation factor GTPase superfamily. Classic translation factor GTPase family. IF-2 subfamily.

It localises to the cytoplasm. In terms of biological role, one of the essential components for the initiation of protein synthesis. Protects formylmethionyl-tRNA from spontaneous hydrolysis and promotes its binding to the 30S ribosomal subunits. Also involved in the hydrolysis of GTP during the formation of the 70S ribosomal complex. This chain is Translation initiation factor IF-2, found in Jannaschia sp. (strain CCS1).